We begin with the raw amino-acid sequence, 293 residues long: Small ribosomal subunit protein uS5 (293 aa).

The disordered stretch occupies residues 1–55 (MADDAGAAGGPGGPGGPGLGGRGGFRGGFGSGLRGRGRGRGRGRGRGRGARGGKA). Position 2 is an N-acetylalanine (A2). The segment covering 7-34 (AAGGPGGPGGPGLGGRGGFRGGFGSGLR) has biased composition (gly residues). 14 tandem repeats follow at residues 9–11 (GGP), 12–14 (GGP), 15–17 (GGP), 22–25 (RGGF), 26–29 (RGGF), 34–35 (RG), 36–37 (RG), 38–39 (RG), 40–41 (RG), 42–43 (RG), 44–45 (RG), 46–47 (RG), 48–49 (RG), and 51–52 (RG). The 3 X 3 AA tandem repeats of G-G-P stretch occupies residues 9-17 (GGPGGPGGP). The segment at 22 to 29 (RGGFRGGF) is 2 X 4 AA tandem repeats of R-G-G-F. The segment at 34-52 (RGRGRGRGRGRGRGRGARG) is 9 X 2 AA tandem repeats of R-G. A compositionally biased stretch (basic residues) spans 35 to 51 (GRGRGRGRGRGRGRGAR). Glycyl lysine isopeptide (Lys-Gly) (interchain with G-Cter in ubiquitin) cross-links involve residues K54 and K58. One can recognise an S5 DRBM domain in the interval 102-165 (LKDEVLKIMP…ILAKLSIVPV (64 aa)). Phosphothreonine is present on T252. Residue K263 is modified to N6-acetyllysine. S264 is modified (phosphoserine). T270 bears the Phosphothreonine mark. Position 275 is an N6-acetyllysine; alternate (K275). K275 is covalently cross-linked (Glycyl lysine isopeptide (Lys-Gly) (interchain with G-Cter in SUMO1); alternate). Residue K275 forms a Glycyl lysine isopeptide (Lys-Gly) (interchain with G-Cter in SUMO2); alternate linkage. K275 participates in a covalent cross-link: Glycyl lysine isopeptide (Lys-Gly) (interchain with G-Cter in ubiquitin); alternate. Position 281 is a phosphoserine (S281).

Belongs to the universal ribosomal protein uS5 family. Component of the small ribosomal subunit. Interacts with zinc finger protein ZNF277 (via zinc-finger domains); the interaction is direct; the interaction is extra-ribosomal. Interaction with ZNF277 competes with the binding of RPS2 to protein arginine methyltransferase PRMT3. In terms of processing, citrullinated by PADI4 in the Arg/Gly-rich region. Asymmetric arginine dimethylation by PRMT3 occurs at multiple sites in the Arg/Gly-rich region. Post-translationally, monoubiquitinated at Lys-54 and Lys-58 by RNF10 when a ribosome has stalled during translation, leading to its degradation by the proteasome. Deubiquitinated at Lys-54 and Lys-58 by USP10, preventing degradation by the proteasome and promoting 40S ribosome subunit recycling following ribosome dissociation.

The protein resides in the cytoplasm. The protein localises to the nucleus. It localises to the nucleolus. In terms of biological role, component of the ribosome, a large ribonucleoprotein complex responsible for the synthesis of proteins in the cell. The small ribosomal subunit (SSU) binds messenger RNAs (mRNAs) and translates the encoded message by selecting cognate aminoacyl-transfer RNA (tRNA) molecules. The large subunit (LSU) contains the ribosomal catalytic site termed the peptidyl transferase center (PTC), which catalyzes the formation of peptide bonds, thereby polymerizing the amino acids delivered by tRNAs into a polypeptide chain. The nascent polypeptides leave the ribosome through a tunnel in the LSU and interact with protein factors that function in enzymatic processing, targeting, and the membrane insertion of nascent chains at the exit of the ribosomal tunnel. Plays a role in the assembly and function of the 40S ribosomal subunit. Mutations in this protein affects the control of translational fidelity. Involved in nucleolar processing of pre-18S ribosomal RNA and ribosome assembly. This Rattus norvegicus (Rat) protein is Small ribosomal subunit protein uS5 (Rps2).